The primary structure comprises 103 residues: Large ribosomal subunit protein bL21 (103 aa).

This sequence belongs to the bacterial ribosomal protein bL21 family. In terms of assembly, part of the 50S ribosomal subunit. Contacts protein L20.

In terms of biological role, this protein binds to 23S rRNA in the presence of protein L20. The protein is Large ribosomal subunit protein bL21 of Maridesulfovibrio salexigens (strain ATCC 14822 / DSM 2638 / NCIMB 8403 / VKM B-1763) (Desulfovibrio salexigens).